The primary structure comprises 962 residues: Probable transport protein MmpL9 (962 aa).

Helical transmembrane passes span 25–45 (LAAI…SVAV), 201–223 (LITG…SIAT), 225–247 (LLIL…FLGY), 256–276 (FVVN…AIFL), 302–322 (ANVI…LSFA), 335–355 (AIGM…IIAI), 383–403 (WPGP…LALP), 768–788 (YDIL…MLMI), 796–816 (LVIV…SVLI), 820–840 (FVGL…LLAV), 867–887 (AMAG…FTMA), and 895–915 (RVIG…TLVV).

This sequence belongs to the resistance-nodulation-cell division (RND) (TC 2.A.6) family. MmpL subfamily.

The protein resides in the cell membrane. This is Probable transport protein MmpL9 (mmpL9) from Mycobacterium tuberculosis (strain ATCC 25618 / H37Rv).